The sequence spans 1639 residues: Protein GFS12 (1639 aa).

The 89-residue stretch at 206–294 folds into the Protein kinase 1 domain; sequence LEEKSKLRCL…IRPSNILLSD (89 aa). Residues 336–608 enclose the BEACH domain; that stretch reads LKISSHLDWQ…FHGFGVDNKR (273 aa). Positions 715–788 constitute a Protein kinase 2 domain; that stretch reads IAGDIFSIGC…AKSLLDSPYF (74 aa). WD repeat units lie at residues 1290–1333 and 1336–1373; these read AHHG…CVSS and AHEE…LISL. The span at 1377–1398 shows a compositional bias: low complexity; it reads SPSDQDQASSDPSSKNNSNPCN. The disordered stretch occupies residues 1377–1399; that stretch reads SPSDQDQASSDPSSKNNSNPCNR. 3 WD repeats span residues 1465–1499, 1511–1549, and 1609–1639; these read ALCS…RLFD, AHDG…TPQP, and RVKS…RICC.

It belongs to the protein kinase superfamily. Tyr protein kinase family. As to quaternary structure, interacts (via protein kinase 2 domain) with BCHC1 (via PH-BEACH domain). Weakly expressed in the cotyledons of germinating seedlings. Restricted to the vascular tissues of cotyledons. Detected in root tips, apical meristem, young flower buds and receptacles.

In terms of biological role, may act predominantly to suppress BCHC1, which itself is a negative factor in protein storage vacuole (PSV) trafficking regulation and plant effector triggered immunity (ETI). Required for ETI, but not for cell death. The chain is Protein GFS12 from Arabidopsis thaliana (Mouse-ear cress).